Consider the following 732-residue polypeptide: Alpha-galactosidase Mel36A (732 aa).

Residues 370–371 (DD), Trp-415, Arg-447, 480–484 (KWDMN), 530–533 (CSGG), and Asp-552 contribute to the substrate site. The active-site Nucleophile is the Asp-482. Catalysis depends on Asp-552, which acts as the Proton donor.

The protein belongs to the glycosyl hydrolase 36 family. As to quaternary structure, homotetramer.

The enzyme catalyses Hydrolysis of terminal, non-reducing alpha-D-galactose residues in alpha-D-galactosides, including galactose oligosaccharides, galactomannans and galactolipids.. In terms of biological role, hydrolyzes the short-chain alpha-galactosaccharide raffinose. The protein is Alpha-galactosidase Mel36A of Lactobacillus acidophilus (strain ATCC 700396 / NCK56 / N2 / NCFM).